Consider the following 239-residue polypeptide: DNA repair protein RecO (239 aa).

Belongs to the RecO family.

Involved in DNA repair and RecF pathway recombination. This Stenotrophomonas maltophilia (strain R551-3) protein is DNA repair protein RecO.